A 157-amino-acid polypeptide reads, in one-letter code: ATP synthase subunit b (157 aa).

A helical membrane pass occupies residues 7-27 (LIAQLVVFFILAWVTMKFVWP).

Belongs to the ATPase B chain family. In terms of assembly, F-type ATPases have 2 components, F(1) - the catalytic core - and F(0) - the membrane proton channel. F(1) has five subunits: alpha(3), beta(3), gamma(1), delta(1), epsilon(1). F(0) has three main subunits: a(1), b(2) and c(10-14). The alpha and beta chains form an alternating ring which encloses part of the gamma chain. F(1) is attached to F(0) by a central stalk formed by the gamma and epsilon chains, while a peripheral stalk is formed by the delta and b chains.

It localises to the cell inner membrane. In terms of biological role, f(1)F(0) ATP synthase produces ATP from ADP in the presence of a proton or sodium gradient. F-type ATPases consist of two structural domains, F(1) containing the extramembraneous catalytic core and F(0) containing the membrane proton channel, linked together by a central stalk and a peripheral stalk. During catalysis, ATP synthesis in the catalytic domain of F(1) is coupled via a rotary mechanism of the central stalk subunits to proton translocation. Its function is as follows. Component of the F(0) channel, it forms part of the peripheral stalk, linking F(1) to F(0). The polypeptide is ATP synthase subunit b (Aromatoleum aromaticum (strain DSM 19018 / LMG 30748 / EbN1) (Azoarcus sp. (strain EbN1))).